An 86-amino-acid chain; its full sequence is Acyl-CoA-binding protein homolog 1 (86 aa).

An ACB domain is found at 1–86 (MTLSFDDAAA…VEELIAKYGA (86 aa)). Residues Lys13, 28–32 (YALFK), Lys50, Lys54, and Tyr73 each bind an acyl-CoA.

It belongs to the ACBP family.

Its function is as follows. Binds medium- and long-chain acyl-CoA esters with very high affinity and may function as an intracellular carrier of acyl-CoA esters. The protein is Acyl-CoA-binding protein homolog 1 (acbp-1) of Caenorhabditis elegans.